The chain runs to 257 residues: Phosphonates import ATP-binding protein PhnC (257 aa).

Residues 7–251 enclose the ABC transporter domain; it reads IQLKDVSKIY…VFTDIYNGGD (245 aa). Residue 40 to 47 coordinates ATP; the sequence is GLSGAGKS.

This sequence belongs to the ABC transporter superfamily. Phosphonates importer (TC 3.A.1.9.1) family. The complex is composed of two ATP-binding proteins (PhnC), two transmembrane proteins (PhnE) and a solute-binding protein (PhnD).

Its subcellular location is the cell membrane. It catalyses the reaction phosphonate(out) + ATP + H2O = phosphonate(in) + ADP + phosphate + H(+). Part of the ABC transporter complex PhnCDE involved in phosphonates import. Responsible for energy coupling to the transport system. This Lactobacillus acidophilus (strain ATCC 700396 / NCK56 / N2 / NCFM) protein is Phosphonates import ATP-binding protein PhnC.